The following is a 355-amino-acid chain: Daphnetin O-methyltransferase 1 (355 aa).

The S-adenosyl-L-homocysteine site is built by Asp-222, Asp-242, and Lys-256. His-260 functions as the Proton acceptor in the catalytic mechanism.

Belongs to the class I-like SAM-binding methyltransferase superfamily. Cation-independent O-methyltransferase family. COMT subfamily.

It catalyses the reaction 7,8-dihydroxycoumarin + S-adenosyl-L-methionine = 7-hydroxy-8-methoxycoumarin + S-adenosyl-L-homocysteine + H(+). It participates in aromatic compound metabolism. The protein operates within secondary metabolite biosynthesis. In terms of biological role, O-methyltransferase involved in the biosynthesis of coumarins natural products such as daphnetin derivatives. Catalyzes specifically the methylation of daphnetin (7,8-dihydroxycoumarin) to produce hydrangetin (7-hydroxy-8-methoxycoumarin). Probably involved in acclimation to low temperature conditions. This is Daphnetin O-methyltransferase 1 from Secale cereale (Rye).